The chain runs to 390 residues: MRYITAGESHGPQLTVILEGVPAGLTLTAEHINKELLRRQKGHGRGRRMQIETDTVEIVSGVRHGMTLGSPITLIVKNDDFKHWTKVMGAEPISEKESKEMKRTITKPRPGHADLNGAIKYGHRDIRNVLERSSARETTVRVAAGAVAKQILKELGVEIAGHVLEIGGVEAKHISNLSIEEIQTITENSPVRCLDKTVEQEMMDAIDNAKSSGDSIGGIVEVIAEGMPIGVGSYVHYDRKLDAKLAGAIMSINAFKGAEIGVGFEAARQPGSKVHDEILWDEEQGYTRKTNNAGGLEGGMTTGMPIVVRGVMKPIPTLYKPLASVDIDTKEAFQASIERSDSCAVPAAGVVAESVVAWELAHALVEQFGKDRMELIQQNITQHNKYAKEF.

NADP(+)-binding residues include Arg-39 and Arg-45. FMN is bound by residues 132 to 134 (RSS), 253 to 254 (NA), Gly-298, 313 to 317 (KPIPT), and Arg-339.

Belongs to the chorismate synthase family. In terms of assembly, homotetramer. It depends on FMNH2 as a cofactor.

It carries out the reaction 5-O-(1-carboxyvinyl)-3-phosphoshikimate = chorismate + phosphate. Its pathway is metabolic intermediate biosynthesis; chorismate biosynthesis; chorismate from D-erythrose 4-phosphate and phosphoenolpyruvate: step 7/7. Functionally, catalyzes the anti-1,4-elimination of the C-3 phosphate and the C-6 proR hydrogen from 5-enolpyruvylshikimate-3-phosphate (EPSP) to yield chorismate, which is the branch point compound that serves as the starting substrate for the three terminal pathways of aromatic amino acid biosynthesis. This reaction introduces a second double bond into the aromatic ring system. This is Chorismate synthase 2 from Bacillus cereus (strain ZK / E33L).